The primary structure comprises 95 residues: Protein IDA-LIKE 2 (95 aa).

An N-terminal signal peptide occupies residues 1 to 35 (MSSRNQRSRITSSFFVSFFTRTILLLLILLLGFCN). The segment at 75–95 (ASGPSRKHNDIGLLSWHRSSP) is disordered.

As to expression, expressed in leaves, buds, flowers, seedlings and seeds. Detected at the base of pedicel, in the floral and funicule abscission zones and in vascular tissues.

It is found in the secreted. It localises to the extracellular space. Functionally, may be involved in floral abscission. This Arabidopsis thaliana (Mouse-ear cress) protein is Protein IDA-LIKE 2 (IDL2).